The primary structure comprises 339 residues: Protein-arginine kinase (339 aa).

Residues 14-242 (IVINSNISLS…LNVISEEKKF (229 aa)) enclose the Phosphagen kinase C-terminal domain. Residues 17–21 (NSNIS), 164–168 (RASVN), and 195–200 (KGLYEE) contribute to the ATP site.

Belongs to the ATP:guanido phosphotransferase family.

It catalyses the reaction L-arginyl-[protein] + ATP = N(omega)-phospho-L-arginyl-[protein] + ADP + H(+). In terms of biological role, catalyzes the specific phosphorylation of arginine residues in proteins. The chain is Protein-arginine kinase from Clostridium botulinum (strain Eklund 17B / Type B).